We begin with the raw amino-acid sequence, 441 residues long: Ribosomal protein uS12 methylthiotransferase RimO (441 aa).

The region spanning 6–116 (QKVGIVSLGC…VVAAVHEAAP (111 aa)) is the MTTase N-terminal domain. Residues Cys15, Cys51, Cys80, Cys147, Cys151, and Cys154 each coordinate [4Fe-4S] cluster. Residues 133 to 370 (LTPRHYAYLK…MAAQQEISER (238 aa)) enclose the Radical SAM core domain. The TRAM domain occupies 373–439 (AQKVGTVIEA…EYDLWGSLAG (67 aa)).

This sequence belongs to the methylthiotransferase family. RimO subfamily. It depends on [4Fe-4S] cluster as a cofactor.

The protein resides in the cytoplasm. The catalysed reaction is L-aspartate(89)-[ribosomal protein uS12]-hydrogen + (sulfur carrier)-SH + AH2 + 2 S-adenosyl-L-methionine = 3-methylsulfanyl-L-aspartate(89)-[ribosomal protein uS12]-hydrogen + (sulfur carrier)-H + 5'-deoxyadenosine + L-methionine + A + S-adenosyl-L-homocysteine + 2 H(+). Catalyzes the methylthiolation of an aspartic acid residue of ribosomal protein uS12. The chain is Ribosomal protein uS12 methylthiotransferase RimO from Rhodospirillum rubrum (strain ATCC 11170 / ATH 1.1.1 / DSM 467 / LMG 4362 / NCIMB 8255 / S1).